Reading from the N-terminus, the 273-residue chain is Glutamate racemase (273 aa).

Substrate contacts are provided by residues 11–12 and 43–44; these read DS and YG. Residue C74 is the Proton donor/acceptor of the active site. 75-76 is a binding site for substrate; that stretch reads NT. Residue C185 is the Proton donor/acceptor of the active site. 186–187 lines the substrate pocket; it reads TH.

It belongs to the aspartate/glutamate racemases family. As to quaternary structure, homodimer.

It carries out the reaction L-glutamate = D-glutamate. It functions in the pathway cell wall biogenesis; peptidoglycan biosynthesis. Provides the (R)-glutamate required for cell wall biosynthesis. The sequence is that of Glutamate racemase from Enterococcus faecalis (strain ATCC 700802 / V583).